Reading from the N-terminus, the 295-residue chain is Taste receptor type 2 member 120 (295 aa).

Over 1 to 5 (MNLVE) the chain is Extracellular. Residues 6 to 26 (WIVTIIMMTEFLLGNCANVFI) form a helical membrane-spanning segment. The Cytoplasmic segment spans residues 27–45 (TIVNFIDCVKRRKISSADR). A helical transmembrane segment spans residues 46–66 (IITAIAIFRIGLLWAMLTNWH). The Extracellular segment spans residues 67–80 (SHVFTPDTDNLQMR). The helical transmembrane segment at 81–101 (VFGGITWAITNHFTTWLGTIL) threads the bilayer. The Cytoplasmic segment spans residues 102–127 (SMFYLFKIANFSNSLFLHLKRKLDNV). Residues 128 to 148 (LLVIFLGSSLFLVAYLGMVNI) form a helical membrane-spanning segment. At 149–177 (KKIAWMSIHEGNVTTKSKLKHVTSITNML) the chain is on the extracellular side. N-linked (GlcNAc...) asparagine glycosylation is present at asparagine 160. A helical membrane pass occupies residues 178–198 (LFSLINIVPFGISLNCVLLLI). Residues 199-228 (YSLSKHLKNMKFYGKGCQDQSTMVHIKALQ) are Cytoplasmic-facing. Residues 229 to 249 (TVVSFLLLYATYSSCVIISGW) form a helical membrane-spanning segment. Topologically, residues 250–255 (SLQNAP) are extracellular. The chain crosses the membrane as a helical span at residues 256–276 (VFLFCVTIGSFYPAGHSCILI). Residues 277-295 (WGNQKLKQVFLLLLRQMRC) are Cytoplasmic-facing.

This sequence belongs to the G-protein coupled receptor T2R family.

Its subcellular location is the membrane. In terms of biological role, putative taste receptor which may play a role in the perception of bitterness. The sequence is that of Taste receptor type 2 member 120 from Mus musculus (Mouse).